The following is a 434-amino-acid chain: Enolase (434 aa).

Substrate contacts are provided by His158 and Glu167. The Proton donor role is filled by Glu210. 3 residues coordinate Mg(2+): Asp245, Glu294, and Asp319. Residues Glu294 and Asp319 each coordinate substrate. Lys344 functions as the Proton acceptor in the catalytic mechanism. Residues 371–374 (SHRS) and Lys395 contribute to the substrate site.

It belongs to the enolase family. In terms of assembly, homodimer. It depends on Mg(2+) as a cofactor.

It localises to the cytoplasm. The enzyme catalyses (2R)-2-phosphoglycerate = phosphoenolpyruvate + H2O. It participates in carbohydrate degradation; glycolysis; pyruvate from D-glyceraldehyde 3-phosphate: step 4/5. This chain is Enolase (ENO), found in Schistosoma mansoni (Blood fluke).